A 282-amino-acid polypeptide reads, in one-letter code: MANQLILLKKDFFTDEQQAVTVADRYPQDVFAEHTHEFCELVMVWRGNGLHVLNERPYRITRGDLFYIRAEDKHSYTSVNDLVLQNIIYCPERLKLNVNWQAMIPGFQGAQWHPHWRLGSMGMNQARQVINQLEHESNGRDPLANEMAELLFGQLVMTLKRHRYATDDLPATSRETLLDKLITALANSLECPFALDAFCQQEQCSERVLRQQFRAQTGMTINQYLRQVRICHAQYLLQHSPLMISEISMQCGFEDSNYFSVVFTRETGMTPSQWRHLSNQSD.

One can recognise an HTH araC/xylS-type domain in the interval 179–277 (DKLITALANS…GMTPSQWRHL (99 aa)). DNA-binding regions (H-T-H motif) lie at residues 196–217 (DAFC…RAQT) and 244–267 (ISEI…TRET).

As to quaternary structure, binds DNA as a dimer.

The protein localises to the cytoplasm. Activates expression of the rhaSR operon in response to L-rhamnose. This Salmonella typhimurium (strain LT2 / SGSC1412 / ATCC 700720) protein is HTH-type transcriptional activator RhaR.